Reading from the N-terminus, the 236-residue chain is Biosynthetic peptidoglycan transglycosylase (236 aa).

A helical transmembrane segment spans residues 20 to 40; that stretch reads GLVVAAVLALIPTMLTFLYLP.

The protein belongs to the glycosyltransferase 51 family.

The protein resides in the cell inner membrane. The catalysed reaction is [GlcNAc-(1-&gt;4)-Mur2Ac(oyl-L-Ala-gamma-D-Glu-L-Lys-D-Ala-D-Ala)](n)-di-trans,octa-cis-undecaprenyl diphosphate + beta-D-GlcNAc-(1-&gt;4)-Mur2Ac(oyl-L-Ala-gamma-D-Glu-L-Lys-D-Ala-D-Ala)-di-trans,octa-cis-undecaprenyl diphosphate = [GlcNAc-(1-&gt;4)-Mur2Ac(oyl-L-Ala-gamma-D-Glu-L-Lys-D-Ala-D-Ala)](n+1)-di-trans,octa-cis-undecaprenyl diphosphate + di-trans,octa-cis-undecaprenyl diphosphate + H(+). It participates in cell wall biogenesis; peptidoglycan biosynthesis. Functionally, peptidoglycan polymerase that catalyzes glycan chain elongation from lipid-linked precursors. The polypeptide is Biosynthetic peptidoglycan transglycosylase (Mesorhizobium japonicum (strain LMG 29417 / CECT 9101 / MAFF 303099) (Mesorhizobium loti (strain MAFF 303099))).